We begin with the raw amino-acid sequence, 467 residues long: Zinc finger and BTB domain-containing protein 43 (467 aa).

Met1 carries the post-translational modification N-acetylmethionine. One can recognise a BTB domain in the interval 33–97 (CDVSIVVQGH…SYTGRLVMPA (65 aa)). Disordered regions lie at residues 134-153 (LNHG…GLVE) and 162-225 (HTDF…SAEF). 2 stretches are compositionally biased toward basic and acidic residues: residues 164-174 (DFPKAQELRDG) and 182-194 (KDEL…EHEY). Glycyl lysine isopeptide (Lys-Gly) (interchain with G-Cter in SUMO2) cross-links involve residues Lys182, Lys241, Lys247, Lys297, and Lys358. The segment at 373-394 (YPCQCGKSFTHKSQRDRHMSMH) adopts a C2H2-type 1; atypical zinc-finger fold. A C2H2-type 2 zinc finger spans residues 400–422 (YGCGVCGKKFKMKHHLVGHMKIH). A Phosphothreonine modification is found at Thr423. The segment at 428 to 450 (YECNICAKRFMWRDSFHRHVTSC) adopts a C2H2-type 3; atypical zinc-finger fold. Lys458 is covalently cross-linked (Glycyl lysine isopeptide (Lys-Gly) (interchain with G-Cter in SUMO2)).

This sequence belongs to the krueppel C2H2-type zinc-finger protein family. As to quaternary structure, interacts with BDP1.

It localises to the nucleus. May be involved in transcriptional regulation. The protein is Zinc finger and BTB domain-containing protein 43 (ZBTB43) of Homo sapiens (Human).